We begin with the raw amino-acid sequence, 267 residues long: Thymidylate synthase (267 aa).

Residue R25 participates in dUMP binding. H55 contacts (6R)-5,10-methylene-5,6,7,8-tetrahydrofolate. A dUMP-binding site is contributed by 130 to 131; it reads RR. C150 functions as the Nucleophile in the catalytic mechanism. Residues 170–173, N181, and 211–213 each bind dUMP; these read RSAD and HIY. D173 contacts (6R)-5,10-methylene-5,6,7,8-tetrahydrofolate. (6R)-5,10-methylene-5,6,7,8-tetrahydrofolate is bound at residue A266.

The protein belongs to the thymidylate synthase family. Bacterial-type ThyA subfamily. Homodimer.

The protein localises to the cytoplasm. It catalyses the reaction dUMP + (6R)-5,10-methylene-5,6,7,8-tetrahydrofolate = 7,8-dihydrofolate + dTMP. Its pathway is pyrimidine metabolism; dTTP biosynthesis. In terms of biological role, catalyzes the reductive methylation of 2'-deoxyuridine-5'-monophosphate (dUMP) to 2'-deoxythymidine-5'-monophosphate (dTMP) while utilizing 5,10-methylenetetrahydrofolate (mTHF) as the methyl donor and reductant in the reaction, yielding dihydrofolate (DHF) as a by-product. This enzymatic reaction provides an intracellular de novo source of dTMP, an essential precursor for DNA biosynthesis. This chain is Thymidylate synthase, found in Corynebacterium efficiens (strain DSM 44549 / YS-314 / AJ 12310 / JCM 11189 / NBRC 100395).